A 366-amino-acid chain; its full sequence is MEISDIRNELEAMAKRLENYRASLNLTEKEARIAELENEMTYPDFWDNQEKAQKVIDESNGLKAMVDKYQDLANQHEDGEVTLELIKEEPDAEMQEELGESIQALKKEFDDFELEILLNGPYDANNAILELHPGAGGTESQDWASMLLRMYQRFADKQGWKVETVDYLPGEEAGVKSVTLRIVGHNAYGYLKAEKGIHRLVRISPFDSSGRRHTSFVSCDVMPEFDDDIEIEVRTEDLRIDTYRASGAGGQHINTTDSAVRITHVPTGVVVSCQTERSQIKNRESAMKMLKAKLYQRELDEQQRKLDEIRGEKTDIGWGSQIRSYVFHPYSMVKDHRTNYEVGNTSGVMDGDVMPFIDAYLRKTNM.

Q251 bears the N5-methylglutamine mark.

This sequence belongs to the prokaryotic/mitochondrial release factor family. In terms of processing, methylated by PrmC. Methylation increases the termination efficiency of RF2.

Its subcellular location is the cytoplasm. In terms of biological role, peptide chain release factor 2 directs the termination of translation in response to the peptide chain termination codons UGA and UAA. This is Peptide chain release factor 2 from Exiguobacterium sp. (strain ATCC BAA-1283 / AT1b).